Reading from the N-terminus, the 128-residue chain is NADPH-dependent 7-cyano-7-deazaguanine reductase (128 aa).

Cys-34 functions as the Thioimide intermediate in the catalytic mechanism. The Proton donor role is filled by Asp-41. Substrate-binding positions include 56 to 58 (VEL) and 75 to 76 (HE).

It belongs to the GTP cyclohydrolase I family. QueF type 1 subfamily.

The protein resides in the cytoplasm. It catalyses the reaction 7-aminomethyl-7-carbaguanine + 2 NADP(+) = 7-cyano-7-deazaguanine + 2 NADPH + 3 H(+). The protein operates within tRNA modification; tRNA-queuosine biosynthesis. Functionally, catalyzes the NADPH-dependent reduction of 7-cyano-7-deazaguanine (preQ0) to 7-aminomethyl-7-deazaguanine (preQ1). In Thermomicrobium roseum (strain ATCC 27502 / DSM 5159 / P-2), this protein is NADPH-dependent 7-cyano-7-deazaguanine reductase.